Here is a 294-residue protein sequence, read N- to C-terminus: Sperm acrosome membrane-associated protein 1 (294 aa).

The signal sequence occupies residues M1–G29. At T30–F221 the chain is on the extracellular side. The N-linked (GlcNAc...) asparagine glycan is linked to N31. A disordered region spans residues A42–V70. Acidic residues predominate over residues E46 to T58. The chain crosses the membrane as a helical span at residues V222 to I242. Residues N243–E294 lie on the Cytoplasmic side of the membrane. Residue S256 is modified to Phosphoserine. Residues P258–V267 are compositionally biased toward polar residues. The segment at P258–E294 is disordered. A Phosphotyrosine modification is found at Y269. Acidic residues predominate over residues P283–E294. S290 is modified (phosphoserine).

As to quaternary structure, interacts with CYLC1; the interaction may be relevant for proper acrosome attachment to the nuclear envelope. N-glycosylated. As to expression, testis specific.

The protein localises to the cytoplasmic vesicle. The protein resides in the secretory vesicle. It localises to the acrosome inner membrane. In terms of biological role, plays a role in acrosome formation and establishment of normal sperm morphology during spermatogenesis. Important for male fertility. In Homo sapiens (Human), this protein is Sperm acrosome membrane-associated protein 1 (SPACA1).